The sequence spans 171 residues: MDRSQKADAVAELNSVFNEAGVVVVTRNLGLTVAASTELRGKMREAGASYKVAKNRLAKLALKDTDYEGIGEMLTGPIALGYSADPVAAAKAAVDFAKSNDRLEIVGGSMGGQMLDEAGVKALASMPSLDELRGTIVGLINAPATKIAQVVTAPANKLARVFGAYGASEAA.

It belongs to the universal ribosomal protein uL10 family. Part of the ribosomal stalk of the 50S ribosomal subunit. The N-terminus interacts with L11 and the large rRNA to form the base of the stalk. The C-terminus forms an elongated spine to which L12 dimers bind in a sequential fashion forming a multimeric L10(L12)X complex.

Functionally, forms part of the ribosomal stalk, playing a central role in the interaction of the ribosome with GTP-bound translation factors. The sequence is that of Large ribosomal subunit protein uL10 from Erythrobacter litoralis (strain HTCC2594).